The sequence spans 215 residues: Uridine kinase (215 aa).

Residue 16–23 (GASASGKS) coordinates ATP.

It belongs to the uridine kinase family.

The protein localises to the cytoplasm. It catalyses the reaction uridine + ATP = UMP + ADP + H(+). It carries out the reaction cytidine + ATP = CMP + ADP + H(+). The protein operates within pyrimidine metabolism; CTP biosynthesis via salvage pathway; CTP from cytidine: step 1/3. It participates in pyrimidine metabolism; UMP biosynthesis via salvage pathway; UMP from uridine: step 1/1. In Aliivibrio fischeri (strain ATCC 700601 / ES114) (Vibrio fischeri), this protein is Uridine kinase.